Reading from the N-terminus, the 890-residue chain is DNA mismatch repair protein MutS (890 aa).

607–614 (GPNMSGKS) is an ATP binding site.

This sequence belongs to the DNA mismatch repair MutS family.

In terms of biological role, this protein is involved in the repair of mismatches in DNA. It is possible that it carries out the mismatch recognition step. This protein has a weak ATPase activity. The protein is DNA mismatch repair protein MutS of Bacillus thuringiensis subsp. konkukian (strain 97-27).